The chain runs to 749 residues: 1,4-alpha-glucan branching enzyme GlgB (749 aa).

Aspartate 415 serves as the catalytic Nucleophile. Residue glutamate 468 is the Proton donor of the active site.

It belongs to the glycosyl hydrolase 13 family. GlgB subfamily. In terms of assembly, monomer.

The enzyme catalyses Transfers a segment of a (1-&gt;4)-alpha-D-glucan chain to a primary hydroxy group in a similar glucan chain.. The protein operates within glycan biosynthesis; glycogen biosynthesis. Functionally, catalyzes the formation of the alpha-1,6-glucosidic linkages in glycogen by scission of a 1,4-alpha-linked oligosaccharide from growing alpha-1,4-glucan chains and the subsequent attachment of the oligosaccharide to the alpha-1,6 position. This is 1,4-alpha-glucan branching enzyme GlgB from Nitrosococcus oceani (strain ATCC 19707 / BCRC 17464 / JCM 30415 / NCIMB 11848 / C-107).